We begin with the raw amino-acid sequence, 253 residues long: Small ribosomal subunit protein uS2 (253 aa).

The protein belongs to the universal ribosomal protein uS2 family.

The protein is Small ribosomal subunit protein uS2 of Parvibaculum lavamentivorans (strain DS-1 / DSM 13023 / NCIMB 13966).